The chain runs to 556 residues: 2-succinyl-5-enolpyruvyl-6-hydroxy-3-cyclohexene-1-carboxylate synthase (556 aa).

Belongs to the TPP enzyme family. MenD subfamily. As to quaternary structure, homodimer. It depends on Mg(2+) as a cofactor. Mn(2+) is required as a cofactor. Requires thiamine diphosphate as cofactor.

It catalyses the reaction isochorismate + 2-oxoglutarate + H(+) = 5-enolpyruvoyl-6-hydroxy-2-succinyl-cyclohex-3-ene-1-carboxylate + CO2. It functions in the pathway quinol/quinone metabolism; 1,4-dihydroxy-2-naphthoate biosynthesis; 1,4-dihydroxy-2-naphthoate from chorismate: step 2/7. The protein operates within quinol/quinone metabolism; menaquinone biosynthesis. Functionally, catalyzes the thiamine diphosphate-dependent decarboxylation of 2-oxoglutarate and the subsequent addition of the resulting succinic semialdehyde-thiamine pyrophosphate anion to isochorismate to yield 2-succinyl-5-enolpyruvyl-6-hydroxy-3-cyclohexene-1-carboxylate (SEPHCHC). The sequence is that of 2-succinyl-5-enolpyruvyl-6-hydroxy-3-cyclohexene-1-carboxylate synthase from Citrobacter koseri (strain ATCC BAA-895 / CDC 4225-83 / SGSC4696).